The primary structure comprises 1372 residues: DNA-directed RNA polymerase subunit beta (1372 aa).

The protein belongs to the RNA polymerase beta chain family. In terms of assembly, the RNAP catalytic core consists of 2 alpha, 1 beta, 1 beta' and 1 omega subunit. When a sigma factor is associated with the core the holoenzyme is formed, which can initiate transcription.

The catalysed reaction is RNA(n) + a ribonucleoside 5'-triphosphate = RNA(n+1) + diphosphate. Functionally, DNA-dependent RNA polymerase catalyzes the transcription of DNA into RNA using the four ribonucleoside triphosphates as substrates. The polypeptide is DNA-directed RNA polymerase subunit beta (Rickettsia bellii (strain OSU 85-389)).